Reading from the N-terminus, the 130-residue chain is Small ribosomal subunit protein uS11c (130 aa).

The protein belongs to the universal ribosomal protein uS11 family. Part of the 30S ribosomal subunit.

Its subcellular location is the plastid. It localises to the cyanelle. The protein is Small ribosomal subunit protein uS11c of Cyanophora paradoxa.